Here is a 333-residue protein sequence, read N- to C-terminus: Transaldolase NQM1 (333 aa).

The active-site Schiff-base intermediate with substrate is Lys-144.

This sequence belongs to the transaldolase family. Type 1 subfamily. In terms of assembly, homodimer.

It catalyses the reaction D-sedoheptulose 7-phosphate + D-glyceraldehyde 3-phosphate = D-erythrose 4-phosphate + beta-D-fructose 6-phosphate. The protein operates within carbohydrate degradation; pentose phosphate pathway; D-glyceraldehyde 3-phosphate and beta-D-fructose 6-phosphate from D-ribose 5-phosphate and D-xylulose 5-phosphate (non-oxidative stage): step 2/3. Its function is as follows. Transaldolase is important for the balance of metabolites in the pentose-phosphate pathway. The chain is Transaldolase NQM1 (NQM1) from Saccharomyces cerevisiae (strain ATCC 204508 / S288c) (Baker's yeast).